A 1365-amino-acid chain; its full sequence is DNA-directed RNA polymerase subunit beta'' (1365 aa).

Residues cysteine 224, cysteine 295, cysteine 302, and cysteine 305 each contribute to the Zn(2+) site.

This sequence belongs to the RNA polymerase beta' chain family. RpoC2 subfamily. As to quaternary structure, in plastids the minimal PEP RNA polymerase catalytic core is composed of four subunits: alpha, beta, beta', and beta''. When a (nuclear-encoded) sigma factor is associated with the core the holoenzyme is formed, which can initiate transcription. The cofactor is Zn(2+).

It localises to the plastid. It is found in the chloroplast. The catalysed reaction is RNA(n) + a ribonucleoside 5'-triphosphate = RNA(n+1) + diphosphate. Functionally, DNA-dependent RNA polymerase catalyzes the transcription of DNA into RNA using the four ribonucleoside triphosphates as substrates. This chain is DNA-directed RNA polymerase subunit beta'', found in Fagopyrum esculentum subsp. ancestrale (Wild buckwheat).